The sequence spans 105 residues: Small ribosomal subunit protein uS10 (105 aa).

This sequence belongs to the universal ribosomal protein uS10 family. As to quaternary structure, part of the 30S ribosomal subunit.

Involved in the binding of tRNA to the ribosomes. The chain is Small ribosomal subunit protein uS10 from Gloeothece citriformis (strain PCC 7424) (Cyanothece sp. (strain PCC 7424)).